We begin with the raw amino-acid sequence, 506 residues long: Dipeptide and tripeptide permease A (506 aa).

The Cytoplasmic segment spans residues 1–36 (MSTANNNSESTESVSMNAFKQPKAFYLIFSIELWER). Residues 37–57 (FGYYGLQGIMAVYLVKMLGMS) traverse the membrane as a helical segment. Residues 58–61 (ETDS) are Periplasmic-facing. Residues 62 to 82 (ITLFSSFSALVYGFVAIGGWL) traverse the membrane as a helical segment. At 83-91 (GDKVLGTKR) the chain is on the cytoplasmic side. Transmembrane regions (helical) follow at residues 92–112 (VIVL…YSGH) and 113–133 (SVAW…LFKA). The Cytoplasmic portion of the chain corresponds to 134 to 155 (NPSALLSTCYAKDDPRLDGAFT). Residues 156–176 (MYYMAVNIGSFFSMLATPVLA) traverse the membrane as a helical segment. Residues 177 to 180 (ANYG) are Periplasmic-facing. Residues 181–201 (WSVAFSLSVVGMILTLVNFMF) traverse the membrane as a helical segment. The Cytoplasmic portion of the chain corresponds to 202 to 222 (CRKWVSTQGSQPDFQPINLKK). The helical transmembrane segment at 223 to 243 (LVITLAGIVVLVALSTWLLHN) threads the bilayer. The Periplasmic portion of the chain corresponds to 244-248 (QGVAR). Residues 249–269 (WILTIISLAVVAIFIKEMLAV) form a helical membrane-spanning segment. The Cytoplasmic segment spans residues 270 to 276 (SGAERRK). A helical transmembrane segment spans residues 277–297 (MIVALLLMLEAVVFFVLYNQM). The Periplasmic segment spans residues 298 to 322 (PTSLNFFAIRNVEHSILGFAFEPEQ). The helical transmembrane segment at 323-343 (YQALNPFWIMVASPLLAAVYN) threads the bilayer. Over 344 to 354 (KMGDQLPMAHK) the chain is Cytoplasmic. A helical membrane pass occupies residues 355 to 375 (FAIGMVLCSGAFLVLPWGASM). The Periplasmic portion of the chain corresponds to 376–385 (ANEQGIVSVN). A helical transmembrane segment spans residues 386 to 406 (WLILCYGLQSIGELMISGLGL). Over 407-416 (AMVAQLVPQR) the chain is Cytoplasmic. The chain crosses the membrane as a helical span at residues 417-437 (LMGFIMGAWFLTSAGAAIIAG). At 438–461 (YVANMMAVPENVVDPHVSLEVYSN) the chain is on the periplasmic side. The helical transmembrane segment at 462 to 482 (VFMQIGIVTGIIAVLMMLTAP) threads the bilayer. Residues 483–506 (KLTRMTQDVATDVPADAATTTASA) are Cytoplasmic-facing.

The protein belongs to the major facilitator superfamily. Proton-dependent oligopeptide transporter (POT/PTR) (TC 2.A.17) family. DtpA subfamily.

Its subcellular location is the cell inner membrane. In terms of biological role, proton-dependent permease that transports di- and tripeptides. The sequence is that of Dipeptide and tripeptide permease A from Pectobacterium carotovorum subsp. carotovorum (strain PC1).